A 124-amino-acid chain; its full sequence is MSENPDDLELESEEKQCELKSGCVYLQDSPEKTCNPILSEEAKLKAKYPSLGHKPGGSDFLMKRLQKGQKYFDSGDYNMAKAKMKSKHVVQSAAEKSLVTGDHIPTPQDLPQRKNTILTSKLAG.

Position 74 is a phosphoserine; by GWL (serine 74). The interval 99–124 is disordered; the sequence is VTGDHIPTPQDLPQRKNTILTSKLAG. The segment covering 113–124 has biased composition (polar residues); sequence RKNTILTSKLAG.

The protein belongs to the endosulfine family. In terms of processing, phosphorylation at Ser-74 by gwl during mitosis is essential for interaction with ppp2r2d (PR55-delta) and subsequent inactivation of PP2A.

It is found in the cytoplasm. Protein phosphatase inhibitor that specifically inhibits protein phosphatase 2A (PP2A) during mitosis. When phosphorylated at Ser-67 during mitosis, specifically interacts with ppp2r2d (PR55-delta) and inhibits its activity, leading to inactivation of PP2A, an essential condition to keep cyclin-B1-CDK1 activity high during M phase. The sequence is that of Alpha-endosulfine (ensa) from Danio rerio (Zebrafish).